A 90-amino-acid polypeptide reads, in one-letter code: Protein LURE 1.4 (90 aa).

The N-terminal stretch at Met1–Ser19 is a signal peptide. N-linked (GlcNAc...) asparagine glycosylation occurs at Asn23. 3 disulfide bridges follow: Cys58-Cys75, Cys61-Cys82, and Cys65-Cys84. The tract at residues Arg67–Ser87 is PRK6 binding.

The protein belongs to the DEFL family. In terms of assembly, binds to PRK6 LRRs. As to expression, expressed in the pistil. Detected exclusively in the synergid cells.

It is found in the secreted. Pollen tube attractants guiding pollen tubes to the ovular micropyle. The protein is Protein LURE 1.4 of Arabidopsis thaliana (Mouse-ear cress).